Here is a 176-residue protein sequence, read N- to C-terminus: ATP-dependent protease subunit HslV (176 aa).

Thr-2 is an active-site residue. Positions 157, 160, and 163 each coordinate Na(+).

It belongs to the peptidase T1B family. HslV subfamily. As to quaternary structure, a double ring-shaped homohexamer of HslV is capped on each side by a ring-shaped HslU homohexamer. The assembly of the HslU/HslV complex is dependent on binding of ATP.

It is found in the cytoplasm. It carries out the reaction ATP-dependent cleavage of peptide bonds with broad specificity.. With respect to regulation, allosterically activated by HslU binding. Protease subunit of a proteasome-like degradation complex believed to be a general protein degrading machinery. This Erwinia tasmaniensis (strain DSM 17950 / CFBP 7177 / CIP 109463 / NCPPB 4357 / Et1/99) protein is ATP-dependent protease subunit HslV.